Consider the following 207-residue polypeptide: Ribonuclease HII (207 aa).

The RNase H type-2 domain maps to 18 to 207; sequence TYLSGSDEAG…PIKKISKETS (190 aa). A divalent metal cation-binding residues include D24, E25, and D116.

It belongs to the RNase HII family. Mn(2+) serves as cofactor. Requires Mg(2+) as cofactor.

It localises to the cytoplasm. The catalysed reaction is Endonucleolytic cleavage to 5'-phosphomonoester.. In terms of biological role, endonuclease that specifically degrades the RNA of RNA-DNA hybrids. The sequence is that of Ribonuclease HII from Mycoplasma capricolum subsp. capricolum (strain California kid / ATCC 27343 / NCTC 10154).